A 424-amino-acid polypeptide reads, in one-letter code: Serine--tRNA ligase (424 aa).

232–234 (TAE) lines the L-serine pocket. 263 to 265 (RQE) contributes to the ATP binding site. E286 is a binding site for L-serine. 350 to 353 (EIGS) is an ATP binding site. S386 contacts L-serine.

Belongs to the class-II aminoacyl-tRNA synthetase family. Type-1 seryl-tRNA synthetase subfamily. In terms of assembly, homodimer. The tRNA molecule binds across the dimer.

Its subcellular location is the cytoplasm. The enzyme catalyses tRNA(Ser) + L-serine + ATP = L-seryl-tRNA(Ser) + AMP + diphosphate + H(+). The catalysed reaction is tRNA(Sec) + L-serine + ATP = L-seryl-tRNA(Sec) + AMP + diphosphate + H(+). It functions in the pathway aminoacyl-tRNA biosynthesis; selenocysteinyl-tRNA(Sec) biosynthesis; L-seryl-tRNA(Sec) from L-serine and tRNA(Sec): step 1/1. Functionally, catalyzes the attachment of serine to tRNA(Ser). Is also able to aminoacylate tRNA(Sec) with serine, to form the misacylated tRNA L-seryl-tRNA(Sec), which will be further converted into selenocysteinyl-tRNA(Sec). This is Serine--tRNA ligase from Onion yellows phytoplasma (strain OY-M).